The chain runs to 259 residues: Probable WRKY transcription factor 65 (259 aa).

Basic and acidic residues predominate over residues 1 to 17 (MKRGLDMARSYNDHESS). Disordered regions lie at residues 1–101 (MKRG…RCSS) and 126–165 (TSEH…EEED). Positions 18 to 31 (QETGPESPNSSTFN) are enriched in polar residues. The span at 47–69 (RSVEKRVVNVPMKEMEGSRHKGD) shows a compositional bias: basic and acidic residues. The segment at residues 68 to 134 (GDTTPPSDSW…YTSEHNHPWP (67 aa)) is a DNA-binding region (WRKY). Residues 154-165 (EPEVEPEAEEED) show a composition bias toward acidic residues.

The protein localises to the nucleus. Transcription factor. Interacts specifically with the W box (5'-(T)TGAC[CT]-3'), a frequently occurring elicitor-responsive cis-acting element. The protein is Probable WRKY transcription factor 65 (WRKY65) of Arabidopsis thaliana (Mouse-ear cress).